The chain runs to 103 residues: Large ribosomal subunit protein uL24 (103 aa).

This sequence belongs to the universal ribosomal protein uL24 family. In terms of assembly, part of the 50S ribosomal subunit.

In terms of biological role, one of two assembly initiator proteins, it binds directly to the 5'-end of the 23S rRNA, where it nucleates assembly of the 50S subunit. One of the proteins that surrounds the polypeptide exit tunnel on the outside of the subunit. The protein is Large ribosomal subunit protein uL24 of Mannheimia succiniciproducens (strain KCTC 0769BP / MBEL55E).